The primary structure comprises 105 residues: Keratin-associated protein 17-1 (105 aa).

In terms of assembly, interacts with hair keratins.

Its function is as follows. In the hair cortex, hair keratin intermediate filaments are embedded in an interfilamentous matrix, consisting of hair keratin-associated proteins (KRTAP), which are essential for the formation of a rigid and resistant hair shaft through their extensive disulfide bond cross-linking with abundant cysteine residues of hair keratins. The matrix proteins include the high-sulfur and high-glycine-tyrosine keratins. The chain is Keratin-associated protein 17-1 (KRTAP17-1) from Homo sapiens (Human).